Here is a 1515-residue protein sequence, read N- to C-terminus: Apolipophorin (1515 aa).

The VWFD domain occupies 952-1118 (LRGVVVNGQH…NSYRLASSCP (167 aa)). Cys976 and Cys1117 are oxidised to a cystine. Asn988 carries N-linked (GlcNAc...) asparagine glycosylation.

In terms of tissue distribution, hemolymph.

The protein resides in the secreted. Its function is as follows. Mediates transport for various types of lipids in hemolymph. Acts by forming lipoprotein particles that bind lipoproteins and lipids. Binds the A.niger cell wall component alpha-1,3-glucan, a fungal pathogen-associated molecular pattern (PAMP) that activates the host immune response. The sequence is that of Apolipophorin from Galleria mellonella (Greater wax moth).